A 467-amino-acid chain; its full sequence is MSFPQLGYPQYLSAGQAAVYGGERPGVLAAAAAAAAAAAAAGSGRPTGADLGSSSTAAVTSVLGMYASPYSAPNYSAFLPYTTDLTLFSQMGSQYELKDNPGVHPATFAAHTTPGYYPYGQFQYGDPGRPKNATRESTSTLKAWLNEHRKNPYPTKGEKIMLAIITKMTLTQVSTWFANARRRLKKENKVTWGARSKEDDNIFGSDTEGDHEKNEDDEEIDLESIDIDKIDDNDGEQSNEEEDEKLEHLRQGEKESFKKESEVMIPSSDGLKSKDSLSLGKESSDTSNTRIVSPGGQGNIQVPPHNKPKIWSLAETATSPDGALKSSPPPSQANHTSPPIQHPAFLPSHGLYTCQIGKFHNWTNGAFLTQSSLINMRSLLGVNPHHVAHHNHHHLQAHQQAPLLATNLSSLSSDKTPERTSPKHSDRENLPRTESPPQLKPSFQAVRENTLSQQEGTSRILTALPSA.

The segment at residues aspartate 126 to asparagine 188 is a DNA-binding region (homeobox; TALE-type). Disordered regions lie at residues glutamate 198–lysine 307, serine 319–histidine 342, and serine 410–alanine 467. Acidic residues-rich tracts occupy residues glutamate 215–isoleucine 225 and asparagine 233–glutamate 244. Basic and acidic residues predominate over residues lysine 245–glutamate 262. Positions lysine 415–proline 431 are enriched in basic and acidic residues. Positions arginine 447 to isoleucine 460 are enriched in polar residues.

The protein belongs to the TALE/IRO homeobox family. In terms of tissue distribution, expressed in the neural plate in overlapping patterns with other irx members, which all share an anterior border of expression. Also expressed in the mesoderm, placodes and notochord. Broadly expressed in the tailbud rhombencephalon (hindbrain). Outside the nervous system and at tailbud stages, expressed in the developing otic vesicle, branchial arches, prospective heart region and pronephros.

The protein resides in the nucleus. Functionally, acts partially redundantly with other irx members in neural patterning. Required for formation of the posterior forebrain, midbrain, hindbrain, and to a lesser extent, spinal cord. Acts early in neural plate development to induce expression of some but not all proneural genes, and specify a neural precursor state. Also up-regulates repressors that prevent neuronal differentiation. Patterns the neuroectoderm in both the anterior/posterior and dorsal/ventral axes. Acts primarily as a transcriptional repressor during neural development, and binds to the bmp4 promoter to repress gene expression and thus mediate down-regulation of bmp4 by wnt signaling. Controls multiple processes through bmp4-repression including neural plate development, neural crest specification and Spemann organizer development. Involved in the specification of the preplacodal field at the anterior border of the neural plate. Regulates the genetic cascade of interactions that are necessary for positioning the isthmus organizer and the formation of the midbrain-hindbrain boundary. Required during at least two stages of pronephros kidney development; during neurula stages, maintains transcription of key renal genes to define the size and identity of the pronephric anlage, probably in part through regulation of bmp-signaling. Subsequently required for proper formation of the intermediate tubule segment of the pronephros. Acts principally as a transcriptional activator during pronephros development. This chain is Iroquois-class homeodomain protein irx-1, found in Xenopus tropicalis (Western clawed frog).